A 243-amino-acid polypeptide reads, in one-letter code: Transmembrane protein 174 (243 aa).

2 helical membrane passes run 40-60 (LLFS…MGWI) and 73-93 (LLGP…VCKF).

In terms of assembly, interacts with SLC34A1; regulates SLC34A1 internalization by PTH and FGF23. In terms of tissue distribution, kidney specific. Expressed in renal primary proximal tubule cells.

The protein resides in the endoplasmic reticulum membrane. It localises to the apical cell membrane. In terms of biological role, regulator of plasma phosphate homeostasis. Decreases serum inorganic phosphate (Pi) uptake by regulating the sodium-phosphate cotransporter SLC34A1 trafficking by PTH and FGF23 in the kidney. The chain is Transmembrane protein 174 (Tmem174) from Mus musculus (Mouse).